We begin with the raw amino-acid sequence, 466 residues long: ATP synthase subunit beta (466 aa).

Position 155–162 (155–162) interacts with ATP; sequence GGAGVGKT.

Belongs to the ATPase alpha/beta chains family. In terms of assembly, F-type ATPases have 2 components, CF(1) - the catalytic core - and CF(0) - the membrane proton channel. CF(1) has five subunits: alpha(3), beta(3), gamma(1), delta(1), epsilon(1). CF(0) has three main subunits: a(1), b(2) and c(9-12). The alpha and beta chains form an alternating ring which encloses part of the gamma chain. CF(1) is attached to CF(0) by a central stalk formed by the gamma and epsilon chains, while a peripheral stalk is formed by the delta and b chains.

It localises to the cell inner membrane. The catalysed reaction is ATP + H2O + 4 H(+)(in) = ADP + phosphate + 5 H(+)(out). In terms of biological role, produces ATP from ADP in the presence of a proton gradient across the membrane. The catalytic sites are hosted primarily by the beta subunits. This is ATP synthase subunit beta from Bordetella avium (strain 197N).